Reading from the N-terminus, the 370-residue chain is UDP-N-acetylglucosamine--N-acetylmuramyl-(pentapeptide) pyrophosphoryl-undecaprenol N-acetylglucosamine transferase (370 aa).

Residues 10-12, N124, S196, I253, and Q298 each bind UDP-N-acetyl-alpha-D-glucosamine; that span reads TGG.

This sequence belongs to the glycosyltransferase 28 family. MurG subfamily.

The protein resides in the cell membrane. The enzyme catalyses Mur2Ac(oyl-L-Ala-gamma-D-Glu-L-Lys-D-Ala-D-Ala)-di-trans,octa-cis-undecaprenyl diphosphate + UDP-N-acetyl-alpha-D-glucosamine = beta-D-GlcNAc-(1-&gt;4)-Mur2Ac(oyl-L-Ala-gamma-D-Glu-L-Lys-D-Ala-D-Ala)-di-trans,octa-cis-undecaprenyl diphosphate + UDP + H(+). It functions in the pathway cell wall biogenesis; peptidoglycan biosynthesis. In terms of biological role, cell wall formation. Catalyzes the transfer of a GlcNAc subunit on undecaprenyl-pyrophosphoryl-MurNAc-pentapeptide (lipid intermediate I) to form undecaprenyl-pyrophosphoryl-MurNAc-(pentapeptide)GlcNAc (lipid intermediate II). This Limosilactobacillus reuteri subsp. reuteri (strain JCM 1112) (Lactobacillus reuteri) protein is UDP-N-acetylglucosamine--N-acetylmuramyl-(pentapeptide) pyrophosphoryl-undecaprenol N-acetylglucosamine transferase.